We begin with the raw amino-acid sequence, 414 residues long: Transforming growth factor beta-2 proprotein (414 aa).

The signal sequence occupies residues 1–20; sequence MHYCVLSTFLLLHLVPVALS. 3 N-linked (GlcNAc...) asparagine glycosylation sites follow: N72, N140, and N241. Intrachain disulfides connect C309/C318, C317/C380, C346/C411, and C350/C413.

Belongs to the TGF-beta family. Interacts with the serine proteases, HTRA1 and HTRA3. Interacts with ASPN. Interacts with MFAP5. In terms of assembly, interacts with Transforming growth factor beta-2 (TGF-beta-2) chain; interaction is non-covalent and maintains (TGF-beta-2) in a latent state. Interacts with LRRC32/GARP; leading to regulate activation of TGF-beta-2. Interacts with NREP; the interaction results in a decrease in TGFB2 autoinduction. As to quaternary structure, transforming growth factor beta-2: Homodimer; disulfide-linked. Transforming growth factor beta-2: Interacts with TGF-beta receptors (TGFBR1 and TGFBR2), leading to signal transduction. The precursor proprotein is cleaved in the Golgi apparatus to form Transforming growth factor beta-2 (TGF-beta-2) and Latency-associated peptide (LAP) chains, which remain non-covalently linked, rendering TGF-beta-2 inactive.

The protein resides in the secreted. It localises to the extracellular space. The protein localises to the extracellular matrix. Precursor of the Latency-associated peptide (LAP) and Transforming growth factor beta-2 (TGF-beta-2) chains, which constitute the regulatory and active subunit of TGF-beta-2, respectively. Functionally, required to maintain the Transforming growth factor beta-2 (TGF-beta-2) chain in a latent state during storage in extracellular matrix. Associates non-covalently with TGF-beta-2 and regulates its activation via interaction with 'milieu molecules', such as LTBP1 and LRRC32/GARP, that control activation of TGF-beta-2. Its function is as follows. Multifunctional protein that regulates various processes such as angiogenesis and heart development. Activation into mature form follows different steps: following cleavage of the proprotein in the Golgi apparatus, Latency-associated peptide (LAP) and Transforming growth factor beta-2 (TGF-beta-2) chains remain non-covalently linked rendering TGF-beta-2 inactive during storage in extracellular matrix. At the same time, LAP chain interacts with 'milieu molecules', such as LTBP1 and LRRC32/GARP, that control activation of TGF-beta-2 and maintain it in a latent state during storage in extracellular milieus. Once activated following release of LAP, TGF-beta-2 acts by binding to TGF-beta receptors (TGFBR1 and TGFBR2), which transduce signal. The chain is Transforming growth factor beta-2 proprotein (Tgfb2) from Mus musculus (Mouse).